The following is a 328-amino-acid chain: Homeobox protein Hox-D1 (328 aa).

The short motif at 204–209 is the Antp-type hexapeptide element; it reads TFEWMK. The segment at residues 229–288 is a DNA-binding region (homeobox); the sequence is SSAIRTNFSTKQLTELEKEFHFNKYLTRARRIEIANCLHLNDTQVKIWFQNRRMKQKKRE. The tract at residues 305–328 is disordered; the sequence is PLSGTTPTKFIKNPGSPSQSQEPS. The span at 319–328 shows a compositional bias: polar residues; the sequence is GSPSQSQEPS.

Belongs to the Antp homeobox family. Labial subfamily.

Its subcellular location is the nucleus. Functionally, sequence-specific transcription factor which is part of a developmental regulatory system that provides cells with specific positional identities on the anterior-posterior axis. Acts on the anterior body structures. The sequence is that of Homeobox protein Hox-D1 (HOXD1) from Homo sapiens (Human).